The following is a 293-amino-acid chain: Proline iminopeptidase (293 aa).

The 250-residue stretch at 28-277 (KPLVLLHGGP…FSRHMPFVEE (250 aa)) folds into the AB hydrolase-1 domain. The active-site Nucleophile is Ser-104. The active site involves Asp-244. His-271 (proton donor) is an active-site residue.

The protein belongs to the peptidase S33 family.

It catalyses the reaction Release of N-terminal proline from a peptide.. In terms of biological role, releases the N-terminal proline from various substrates. The protein is Proline iminopeptidase of Clostridium botulinum (strain Hall / ATCC 3502 / NCTC 13319 / Type A).